The primary structure comprises 339 residues: Undecaprenyl-phosphate 4-deoxy-4-formamido-L-arabinose transferase (339 aa).

2 helical membrane-spanning segments follow: residues 235–255 (LSII…MLIV) and 270–290 (FVLF…MGLL).

The protein belongs to the glycosyltransferase 2 family.

The protein resides in the cell inner membrane. The catalysed reaction is UDP-4-deoxy-4-formamido-beta-L-arabinose + di-trans,octa-cis-undecaprenyl phosphate = 4-deoxy-4-formamido-alpha-L-arabinopyranosyl di-trans,octa-cis-undecaprenyl phosphate + UDP. Its pathway is glycolipid biosynthesis; 4-amino-4-deoxy-alpha-L-arabinose undecaprenyl phosphate biosynthesis; 4-amino-4-deoxy-alpha-L-arabinose undecaprenyl phosphate from UDP-4-deoxy-4-formamido-beta-L-arabinose and undecaprenyl phosphate: step 1/2. It functions in the pathway bacterial outer membrane biogenesis; lipopolysaccharide biosynthesis. In terms of biological role, catalyzes the transfer of 4-deoxy-4-formamido-L-arabinose from UDP to undecaprenyl phosphate. The modified arabinose is attached to lipid A and is required for resistance to polymyxin and cationic antimicrobial peptides. The protein is Undecaprenyl-phosphate 4-deoxy-4-formamido-L-arabinose transferase of Pseudomonas fluorescens (strain ATCC BAA-477 / NRRL B-23932 / Pf-5).